A 158-amino-acid polypeptide reads, in one-letter code: MDHDHMHDMPPPSPSSSSMSNHTTPHMMMMHMTFFWGKNTEVLFSGWPGTSSGMYALCLIVIFLLAVIAEWLAHSPILRVSGSTNRAAGLAQTAVYTLKTGLSYLVMLAVMSFNAGVFIVAIAGYGVGFFLFGSTTFKKPSDDQKTAELLPPSSGCVC.

A disordered region spans residues 1-20; that stretch reads MDHDHMHDMPPPSPSSSSMS. Transmembrane regions (helical) follow at residues 53–73 and 104–124; these read GMYALCLIVIFLLAVIAEWLA and YLVMLAVMSFNAGVFIVAIAG.

This sequence belongs to the copper transporter (Ctr) (TC 1.A.56) family. SLC31A subfamily. In terms of tissue distribution, highly expressed in leaves and at lower levels in roots, stems and flowers.

The protein localises to the membrane. In terms of biological role, involved in the transport of copper. In Arabidopsis thaliana (Mouse-ear cress), this protein is Copper transporter 2 (COPT2).